A 260-amino-acid chain; its full sequence is Pyridoxine 5'-phosphate synthase (260 aa).

Residue asparagine 15 participates in 3-amino-2-oxopropyl phosphate binding. Residue 17–18 (DH) participates in 1-deoxy-D-xylulose 5-phosphate binding. 3-amino-2-oxopropyl phosphate is bound at residue arginine 26. Residue histidine 51 is the Proton acceptor of the active site. 1-deoxy-D-xylulose 5-phosphate contacts are provided by arginine 53 and histidine 58. The Proton acceptor role is filled by glutamate 78. Residue threonine 108 coordinates 1-deoxy-D-xylulose 5-phosphate. Histidine 199 serves as the catalytic Proton donor. 3-amino-2-oxopropyl phosphate is bound by residues glycine 200 and 221–222 (GH).

Belongs to the PNP synthase family. Homooctamer; tetramer of dimers.

Its subcellular location is the cytoplasm. It catalyses the reaction 3-amino-2-oxopropyl phosphate + 1-deoxy-D-xylulose 5-phosphate = pyridoxine 5'-phosphate + phosphate + 2 H2O + H(+). The protein operates within cofactor biosynthesis; pyridoxine 5'-phosphate biosynthesis; pyridoxine 5'-phosphate from D-erythrose 4-phosphate: step 5/5. Its function is as follows. Catalyzes the complicated ring closure reaction between the two acyclic compounds 1-deoxy-D-xylulose-5-phosphate (DXP) and 3-amino-2-oxopropyl phosphate (1-amino-acetone-3-phosphate or AAP) to form pyridoxine 5'-phosphate (PNP) and inorganic phosphate. The polypeptide is Pyridoxine 5'-phosphate synthase (Cupriavidus pinatubonensis (strain JMP 134 / LMG 1197) (Cupriavidus necator (strain JMP 134))).